Here is a 223-residue protein sequence, read N- to C-terminus: Putative thymidylate synthase (223 aa).

The active site involves Cys-146.

The protein belongs to the thymidylate synthase family. Archaeal-type ThyA subfamily. In terms of assembly, monomer.

It is found in the cytoplasm. It participates in pyrimidine metabolism; dTTP biosynthesis. Its function is as follows. May catalyze the biosynthesis of dTMP using an unknown cosubstrate. In vitro, also catalyzes the dehalogenation of 5-bromo-deoxyuridine monophosphate (Br-dUMP) and the tritium exchange of [5-3H]deoxyuridine monophosphate ([5-3H]dUMP). This Methanothermobacter marburgensis (strain ATCC BAA-927 / DSM 2133 / JCM 14651 / NBRC 100331 / OCM 82 / Marburg) (Methanobacterium thermoautotrophicum) protein is Putative thymidylate synthase (thyA).